The primary structure comprises 122 residues: Large ribosomal subunit protein uL14 (122 aa).

It belongs to the universal ribosomal protein uL14 family. Part of the 50S ribosomal subunit. Forms a cluster with proteins L3 and L19. In the 70S ribosome, L14 and L19 interact and together make contacts with the 16S rRNA in bridges B5 and B8.

Functionally, binds to 23S rRNA. Forms part of two intersubunit bridges in the 70S ribosome. In Baumannia cicadellinicola subsp. Homalodisca coagulata, this protein is Large ribosomal subunit protein uL14.